The primary structure comprises 492 residues: Protein adenylyltransferase Fic (492 aa).

A compositionally biased stretch (low complexity) spans 1–17; sequence MCTEAEQPSPPAQQQEQ. The interval 1-25 is disordered; the sequence is MCTEAEQPSPPAQQQEQGNPPLCKA. Residues 33–55 form a helical membrane-spanning segment; it reads LYRLVLLFVAGSLAAWTFHALSS. TPR repeat units follow at residues 118–151 and 152–186; these read ALGA…APRH and PEVL…SPSN. Residues 243 to 248 carry the Inhibitory (S/T)XXXE(G/N) motif motif; that stretch reads SVGIEG. Residues Glu-247 and 328–331 each bind ATP; that span reads VGGH. Positions 297-432 constitute a Fido domain; that stretch reads ITIKDILELH…IRPFVRFIAD (136 aa). His-375 is an active-site residue. ATP is bound by residues 379–386, 411–412, and Asn-419; these read DGNGRTSR and YY.

It belongs to the fic family. In terms of assembly, homodimer.

It is found in the membrane. The enzyme catalyses L-tyrosyl-[protein] + ATP = O-(5'-adenylyl)-L-tyrosyl-[protein] + diphosphate. It catalyses the reaction L-threonyl-[protein] + ATP = 3-O-(5'-adenylyl)-L-threonyl-[protein] + diphosphate. The catalysed reaction is 3-O-(5'-adenylyl)-L-threonyl-[protein] + H2O = L-threonyl-[protein] + AMP + H(+). The side chain of Glu-247 determines which of the two opposing activities (AMPylase or de-AMPylase) will take place. In response to endoplasmic reticulum stress, mediates de-AMPylase activity. Adenylyltransferase activity is inhibited by the inhibitory helix present at the N-terminus: Glu-247 binds ATP and competes with ATP-binding at Arg-386, thereby preventing adenylyltransferase activity. In unstressed cells, disengagement of Glu-247 promotes adenylyltransferase activity. Activation dissociates ATP-binding from Glu-247, allowing ordered binding of the entire ATP moiety with the alpha-phosphate in an orientation that is productive for accepting an incoming target hydroxyl side chain. Functionally, protein that can both mediate the addition of adenosine 5'-monophosphate (AMP) to specific residues of target proteins (AMPylation), and the removal of the same modification from target proteins (de-AMPylation), depending on the context. The side chain of Glu-247 determines which of the two opposing activities (AMPylase or de-AMPylase) will take place. Acts as a key regulator of the unfolded protein response (UPR) by mediating AMPylation or de-AMPylation of Hsc70-3/BiP. In unstressed cells, acts as an adenylyltransferase by mediating AMPylation of Hsc70-3/BiP at 'Thr-518', thereby inactivating it. In response to endoplasmic reticulum stress, acts as a phosphodiesterase by mediating removal of ATP (de-AMPylation) from Hsc70-3/BiP at 'Thr-518', leading to restore HSPA5/BiP activity. The protein is Protein adenylyltransferase Fic of Drosophila sechellia (Fruit fly).